A 37-amino-acid chain; its full sequence is Large ribosomal subunit protein bL36 (37 aa).

It belongs to the bacterial ribosomal protein bL36 family.

This Thermomicrobium roseum (strain ATCC 27502 / DSM 5159 / P-2) protein is Large ribosomal subunit protein bL36.